Here is a 153-residue protein sequence, read N- to C-terminus: Calmodulin-like protein 4 (153 aa).

EF-hand domains follow at residues 8 to 43 (DQINEYKECFSLYDKQQRGKIKATDLLTVMRCLGAS), 44 to 79 (PTPGEAQRHLQTHRIDRNGELDFSTFLTIMHMQIKQ), 81 to 116 (DPKKEILLAMLMADKEKKGYIMASELRSKLMQLGEK), and 117 to 152 (LTHKEVEDLFREAGIEPNGKVKYDEFIQKLTIPVRD).

It belongs to the calmodulin family. As to quaternary structure, interacts with MYO7B; the interaction mediates the association of CALML4 with the IMAC/intermicrovillar adhesion complex. Interacts with MYO7A.

Its subcellular location is the cell projection. The protein resides in the microvillus. Its function is as follows. As part of the intermicrovillar adhesion complex/IMAC plays a role in epithelial brush border differentiation, controlling microvilli organization and length. Acts as a light chain for MYO7B and is required for efficient targeting of the IMAC to the tips of border brush microvilli. In Bos taurus (Bovine), this protein is Calmodulin-like protein 4 (CALML4).